The primary structure comprises 217 residues: Nuclear transcription factor Y subunit C-3 (217 aa).

The span at 1–28 (MDQQGQSSAMNYGSNPYQTNAMTTTPTG) shows a compositional bias: polar residues. Disordered regions lie at residues 1-29 (MDQQ…PTGS) and 198-217 (PYMG…DPDN).

This sequence belongs to the NFYC/HAP5 subunit family. As to quaternary structure, heterotrimeric transcription factor composed of three components, NF-YA, NF-YB and NF-YC. NF-YB and NF-YC must interact and dimerize for NF-YA association and DNA binding. As to expression, ubiquitous.

It is found in the nucleus. Stimulates the transcription of various genes by recognizing and binding to a CCAAT motif in promoters. The chain is Nuclear transcription factor Y subunit C-3 (NFYC3) from Arabidopsis thaliana (Mouse-ear cress).